The sequence spans 299 residues: Large ribosomal subunit protein uL29m (299 aa).

It belongs to the universal ribosomal protein uL29 family. In terms of assembly, component of the mitochondrial large ribosomal subunit. Mature mitochondrial ribosomes consist of a small (37S) and a large (54S) subunit. The 37S subunit contains at least 33 different proteins and 1 molecule of RNA (15S). The 54S subunit contains at least 45 different proteins and 1 molecule of RNA (21S).

It localises to the mitochondrion. The polypeptide is Large ribosomal subunit protein uL29m (MRPL4) (Scheffersomyces stipitis (strain ATCC 58785 / CBS 6054 / NBRC 10063 / NRRL Y-11545) (Yeast)).